A 329-amino-acid chain; its full sequence is Gamma-resorcylate decarboxylase (329 aa).

Zn(2+) is bound by residues glutamate 8, histidine 10, histidine 167, and aspartate 290. Aspartate 290 is an active-site residue.

The protein belongs to the metallo-dependent hydrolases superfamily. ACMSD family. Zn(2+) is required as a cofactor.

It catalyses the reaction 2,6-dihydroxybenzoate + H(+) = resorcinol + CO2. It participates in aromatic compound metabolism. Its function is as follows. Involved in the gamma-resorcylate (2,6-dihydroxybenzoate) catabolism. Catalyzes the reversible decarboxylation of gamma-resorcylate to resorcinol. The protein is Gamma-resorcylate decarboxylase of Rhodococcus jostii (strain RHA1).